Consider the following 264-residue polypeptide: Hydroxyethylthiazole kinase (264 aa).

Met-55 serves as a coordination point for substrate. Positions 130 and 176 each coordinate ATP. Gly-203 lines the substrate pocket.

It belongs to the Thz kinase family. It depends on Mg(2+) as a cofactor.

The enzyme catalyses 5-(2-hydroxyethyl)-4-methylthiazole + ATP = 4-methyl-5-(2-phosphooxyethyl)-thiazole + ADP + H(+). Its pathway is cofactor biosynthesis; thiamine diphosphate biosynthesis; 4-methyl-5-(2-phosphoethyl)-thiazole from 5-(2-hydroxyethyl)-4-methylthiazole: step 1/1. Functionally, catalyzes the phosphorylation of the hydroxyl group of 4-methyl-5-beta-hydroxyethylthiazole (THZ). The sequence is that of Hydroxyethylthiazole kinase from Leptospira borgpetersenii serovar Hardjo-bovis (strain JB197).